Here is a 312-residue protein sequence, read N- to C-terminus: MKKSSIVATIITILSGSANAASSQLIPNISPDSFTVAASTGMLSGKSHEMLYDAETGRKISQLDWKIKNVAILKGDISWDPYSFLTLNARGWTSLASGSGNMDDYDWMNENQSEWTDHSSHPATNVNHANEYDLNVKGWLLQDENYKAGITAGYQETRFSWTATGGSYSYNNGAYTGNFPKGVRVIGYNQRFSMPYIGLAGQYRINDFELNALFKFSDWVRAHDNDEHYMRDLTFREKTSGSRYYGTVINAGYYVTPNAKVFAEFTYSKYDEGKGGTQTIDKNSGDSVSIGGDAAGISNKNYTVTAGLQYRF.

An N-terminal signal peptide occupies residues 1 to 20; it reads MKKSSIVATIITILSGSANA. The Periplasmic segment spans residues 21–31; the sequence is ASSQLIPNISP. A beta stranded transmembrane segment spans residues 32-40; that stretch reads DSFTVAAST. Residues 41–70 are Extracellular-facing; that stretch reads GMLSGKSHEMLYDAETGRKISQLDWKIKNV. A beta stranded membrane pass occupies residues 71 to 80; sequence AILKGDISWD. Residues 81 to 84 are Periplasmic-facing; that stretch reads PYSF. Residues 85 to 94 traverse the membrane as a beta stranded segment; sequence LTLNARGWTS. Residues 95 to 131 are Extracellular-facing; it reads LASGSGNMDDYDWMNENQSEWTDHSSHPATNVNHANE. Catalysis depends on residues aspartate 104 and aspartate 106. Residues 132–140 form a beta stranded membrane-spanning segment; sequence YDLNVKGWL. Residues 141-145 are Periplasmic-facing; that stretch reads LQDEN. A beta stranded membrane pass occupies residues 146 to 154; the sequence is YKAGITAGY. Residues 155–194 lie on the Extracellular side of the membrane; that stretch reads QETRFSWTATGGSYSYNNGAYTGNFPKGVRVIGYNQRFSM. A beta stranded membrane pass occupies residues 195 to 204; it reads PYIGLAGQYR. Residues 205–207 lie on the Periplasmic side of the membrane; that stretch reads IND. The chain crosses the membrane as a beta stranded span at residues 208–216; that stretch reads FELNALFKF. Topologically, residues 217–244 are extracellular; sequence SDWVRAHDNDEHYMRDLTFREKTSGSRY. Active-site residues include aspartate 226 and histidine 228. Residues 245 to 255 form a beta stranded membrane-spanning segment; that stretch reads YGTVINAGYYV. The Periplasmic segment spans residues 256 to 258; it reads TPN. A beta stranded membrane pass occupies residues 259 to 267; it reads AKVFAEFTY. Topologically, residues 268-301 are extracellular; that stretch reads SKYDEGKGGTQTIDKNSGDSVSIGGDAAGISNKN. The chain crosses the membrane as a beta stranded span at residues 302–312; sequence YTVTAGLQYRF.

Belongs to the peptidase A26 family.

The protein localises to the cell outer membrane. It carries out the reaction Converts human Glu-plasminogen to plasmin by cleaving the 560-Arg-|-Val-561 peptide bond that is also hydrolyzed by the mammalian u-plasminogen activator and t-plasminogen activator. Also cleaves arginyl bonds in other proteins.. Requires bacterial lipopolysaccharide (LPS) for activation; addition of LPS to inactive protein reactivates it. In the absence of LPS the active site groove is slightly narrower, and peptide substrate binds deep within the active site groove, displacing the nucleophilic water molecule. Its function is as follows. In the mammalian host activates (cleaves) plasminogen to generate the serine protease plasmin. Plasmin degrades fibrin clots (fibrinolysis) and facilitates bacterial cell migration, enabling rapid dissemination of bacteria from the initial site of infection. Cleaves host plasminogen to generate plasmin and probably also has autocatalytic activity. Fibrinolytic activity prevails at 37 degrees Celsius whereas coagulase expression predominates at lower temperatures (28 degrees Celsius). Cleaves plasminogen; plasminogen cleavage is much higher than coagulase activity. This is Plasminogen activator from Yersinia pestis.